Here is a 533-residue protein sequence, read N- to C-terminus: Berberine bridge enzyme-like 12 (533 aa).

The N-terminal stretch at 1–20 is a signal peptide; sequence MYLIFLLFFAASYSMSLSSA. Residues cysteine 32 and cysteine 95 are joined by a disulfide bond. Residues asparagine 35, asparagine 70, asparagine 133, asparagine 296, asparagine 412, and asparagine 417 are each glycosylated (N-linked (GlcNAc...) asparagine). The FAD-binding PCMH-type domain occupies 73–249; it reads SMPKPSIIIV…LAFKVKLVTV (177 aa). A cross-link (6-(S-cysteinyl)-8alpha-(pros-histidyl)-FAD (His-Cys)) is located at residues 110 to 174; sequence HDYDGLSYVS…EVHAFPAGVC (65 aa).

It belongs to the oxygen-dependent FAD-linked oxidoreductase family. It depends on FAD as a cofactor. The FAD cofactor is bound via a bicovalent 6-S-cysteinyl, 8alpha-N1-histidyl FAD linkage.

The protein localises to the secreted. The protein resides in the cell wall. The protein is Berberine bridge enzyme-like 12 of Arabidopsis thaliana (Mouse-ear cress).